The chain runs to 272 residues: Phosphate import ATP-binding protein PstB 1 (272 aa).

The region spanning 26–267 is the ABC transporter domain; that stretch reads ITIENLDLHY…PMKKQTEDYI (242 aa). 58-65 contributes to the ATP binding site; that stretch reads GPSGCGKS.

The protein belongs to the ABC transporter superfamily. Phosphate importer (TC 3.A.1.7) family. As to quaternary structure, the complex is composed of two ATP-binding proteins (PstB), two transmembrane proteins (PstC and PstA) and a solute-binding protein (PstS).

The protein localises to the cell inner membrane. The enzyme catalyses phosphate(out) + ATP + H2O = ADP + 2 phosphate(in) + H(+). Functionally, part of the ABC transporter complex PstSACB involved in phosphate import. Responsible for energy coupling to the transport system. The polypeptide is Phosphate import ATP-binding protein PstB 1 (Vibrio vulnificus (strain YJ016)).